We begin with the raw amino-acid sequence, 347 residues long: NADH-ubiquinone oxidoreductase chain 2 (347 aa).

10 consecutive transmembrane segments (helical) span residues 4 to 21 (LILS…LIVM), 26 to 45 (WLMV…PVLM), 59 to 79 (YFLT…INLI), 96 to 116 (IIMT…FWVP), 122 to 142 (IQLS…MSIL), 148 to 168 (AINM…GGWG), 201 to 221 (ALLN…TFML), 242 to 262 (TTIL…GFLP), 274 to 294 (DSII…YFYM), and 326 to 346 (LPPL…LMLL).

Belongs to the complex I subunit 2 family. In terms of assembly, core subunit of respiratory chain NADH dehydrogenase (Complex I) which is composed of 45 different subunits. Interacts with TMEM242.

It localises to the mitochondrion inner membrane. The catalysed reaction is a ubiquinone + NADH + 5 H(+)(in) = a ubiquinol + NAD(+) + 4 H(+)(out). In terms of biological role, core subunit of the mitochondrial membrane respiratory chain NADH dehydrogenase (Complex I) which catalyzes electron transfer from NADH through the respiratory chain, using ubiquinone as an electron acceptor. Essential for the catalytic activity and assembly of complex I. The chain is NADH-ubiquinone oxidoreductase chain 2 from Syconycteris australis (Southern blossom bat).